Reading from the N-terminus, the 68-residue chain is Large ribosomal subunit protein bL35 (68 aa).

This sequence belongs to the bacterial ribosomal protein bL35 family.

This Rickettsia bellii (strain RML369-C) protein is Large ribosomal subunit protein bL35.